The following is a 348-amino-acid chain: Mannonate dehydratase (348 aa).

This sequence belongs to the mannonate dehydratase family. Fe(2+) is required as a cofactor. The cofactor is Mn(2+).

The catalysed reaction is D-mannonate = 2-dehydro-3-deoxy-D-gluconate + H2O. Its pathway is carbohydrate metabolism; pentose and glucuronate interconversion. Functionally, catalyzes the dehydration of D-mannonate. The sequence is that of Mannonate dehydratase from Staphylococcus haemolyticus (strain JCSC1435).